Consider the following 239-residue polypeptide: DNA repair protein RecO (239 aa).

This sequence belongs to the RecO family.

Functionally, involved in DNA repair and RecF pathway recombination. In Aromatoleum aromaticum (strain DSM 19018 / LMG 30748 / EbN1) (Azoarcus sp. (strain EbN1)), this protein is DNA repair protein RecO.